Here is a 140-residue protein sequence, read N- to C-terminus: Large ribosomal subunit protein bL17 (140 aa).

This sequence belongs to the bacterial ribosomal protein bL17 family. Part of the 50S ribosomal subunit. Contacts protein L32.

This is Large ribosomal subunit protein bL17 from Gluconobacter oxydans (strain 621H) (Gluconobacter suboxydans).